Here is a 346-residue protein sequence, read N- to C-terminus: Heat-inducible transcription repressor HrcA (346 aa).

It belongs to the HrcA family.

Negative regulator of class I heat shock genes (grpE-dnaK-dnaJ and groELS operons). Prevents heat-shock induction of these operons. This Fructilactobacillus sanfranciscensis (Lactobacillus sanfranciscensis) protein is Heat-inducible transcription repressor HrcA.